A 26-amino-acid polypeptide reads, in one-letter code: Hainantoxin F1-31.97 (26 aa).

Intrachain disulfides connect Cys-2/Cys-16 and Cys-9/Cys-21.

It belongs to the neurotoxin 10 (Hwtx-1) family. 17 (Hntx-9) subfamily. As to expression, expressed by the venom gland.

The protein localises to the secreted. Functionally, ion channel inhibitor. In Cyriopagopus hainanus (Chinese bird spider), this protein is Hainantoxin F1-31.97.